We begin with the raw amino-acid sequence, 40 residues long: Large ribosomal subunit protein bL36A (40 aa).

It belongs to the bacterial ribosomal protein bL36 family.

The protein is Large ribosomal subunit protein bL36A of Paenarthrobacter aurescens (strain TC1).